The chain runs to 214 residues: Dephospho-CoA kinase (214 aa).

The region spanning 20–214 (RIGITGGIAS…KLQLKKLYKF (195 aa)) is the DPCK domain. 28–33 (ASGKTI) provides a ligand contact to ATP.

This sequence belongs to the CoaE family.

The protein resides in the cytoplasm. The catalysed reaction is 3'-dephospho-CoA + ATP = ADP + CoA + H(+). It functions in the pathway cofactor biosynthesis; coenzyme A biosynthesis; CoA from (R)-pantothenate: step 5/5. Its function is as follows. Catalyzes the phosphorylation of the 3'-hydroxyl group of dephosphocoenzyme A to form coenzyme A. The chain is Dephospho-CoA kinase from Prochlorococcus marinus (strain NATL2A).